Consider the following 187-residue polypeptide: Mast cell-expressed membrane protein 1 (187 aa).

Over 1–85 (MEVEEIYKHQ…PCWLYRAILS (85 aa)) the chain is Cytoplasmic. The disordered stretch occupies residues 49–71 (DHAKGGHSRPTSQVPAQCRPPSD). Residues 86 to 106 (LYILLALAFVLCIILSAFIMV) traverse the membrane as a helical; Signal-anchor for type II membrane protein segment. Residues 107–187 (KNAEMSKELL…LQKMPQSSPQ (81 aa)) lie on the Extracellular side of the membrane. An N-linked (GlcNAc...) asparagine glycan is attached at N124.

As to expression, expressed specifically in mast cells. Found primarily in lung.

It is found in the membrane. This chain is Mast cell-expressed membrane protein 1, found in Homo sapiens (Human).